Consider the following 197-residue polypeptide: Recombination protein RecR (197 aa).

The C4-type zinc finger occupies 56–71; sequence CNVCFHFSADPICEIC. In terms of domain architecture, Toprim spans 79–173; the sequence is QTICVVADSR…KVTRIAFGLP (95 aa).

It belongs to the RecR family.

In terms of biological role, may play a role in DNA repair. It seems to be involved in an RecBC-independent recombinational process of DNA repair. It may act with RecF and RecO. The protein is Recombination protein RecR of Rippkaea orientalis (strain PCC 8801 / RF-1) (Cyanothece sp. (strain PCC 8801)).